The primary structure comprises 257 residues: Probable branched-chain amino acid transport ATP-binding protein LivG (257 aa).

Residues 8-253 form the ABC transporter domain; it reads LRTENIVKYF…VLSDPKVVEI (246 aa). Position 40–47 (40–47) interacts with ATP; sequence GPNGSGKS.

This sequence belongs to the ABC transporter superfamily. As to quaternary structure, monomer.

Functionally, probable component of a branched-chain amino-acid transport system. This Methanocaldococcus jannaschii (strain ATCC 43067 / DSM 2661 / JAL-1 / JCM 10045 / NBRC 100440) (Methanococcus jannaschii) protein is Probable branched-chain amino acid transport ATP-binding protein LivG (livG).